The primary structure comprises 488 residues: Glutamyl-tRNA(Gln) amidotransferase subunit A (488 aa).

Residues lysine 77 and serine 152 each act as charge relay system in the active site. Serine 176 (acyl-ester intermediate) is an active-site residue.

This sequence belongs to the amidase family. GatA subfamily. As to quaternary structure, heterotrimer of A, B and C subunits.

The catalysed reaction is L-glutamyl-tRNA(Gln) + L-glutamine + ATP + H2O = L-glutaminyl-tRNA(Gln) + L-glutamate + ADP + phosphate + H(+). Allows the formation of correctly charged Gln-tRNA(Gln) through the transamidation of misacylated Glu-tRNA(Gln) in organisms which lack glutaminyl-tRNA synthetase. The reaction takes place in the presence of glutamine and ATP through an activated gamma-phospho-Glu-tRNA(Gln). In Streptococcus pneumoniae (strain ATCC 700669 / Spain 23F-1), this protein is Glutamyl-tRNA(Gln) amidotransferase subunit A.